The sequence spans 309 residues: MPIRVPDELPAVNFLREENVFVMTTSRASGQEIRPLKVLILNLMPKKIETENQFLRLLSNSPLQVDIQLLRIDSRESRNTPAEHLNNFYCNFEDIQEQNFDGLIVTGAPLGLVEFNDVAYWPQIKQVLEWSKDHVTSTLFVCWAVQAALNILYGIPKQTRTDKLSGVYEHHILHPHALLTRGFDDSFLAPHSRYADFPAALIRDYTDLEILAETEEGDAYLFASKDKRIAFVTGHPEYDAQTLAQEYFRDVEAGLDPEVPYNYFPHNDPQNTPRASWRSHGNLLFTNWLNYYVYQITPYDLRHMNPTLD.

C142 functions as the Acyl-thioester intermediate in the catalytic mechanism. Substrate contacts are provided by K163 and S192. The active-site Proton acceptor is H235. E237 is a catalytic residue. A substrate-binding site is contributed by R249.

The protein belongs to the MetA family. Homodimer.

It localises to the cytoplasm. It catalyses the reaction L-homoserine + succinyl-CoA = O-succinyl-L-homoserine + CoA. Its pathway is amino-acid biosynthesis; L-methionine biosynthesis via de novo pathway; O-succinyl-L-homoserine from L-homoserine: step 1/1. Its function is as follows. Transfers a succinyl group from succinyl-CoA to L-homoserine, forming succinyl-L-homoserine. This Escherichia coli O17:K52:H18 (strain UMN026 / ExPEC) protein is Homoserine O-succinyltransferase.